Consider the following 134-residue polypeptide: Transmembrane protein 100 (134 aa).

Helical transmembrane passes span 56–76 (CIIP…AVAY) and 84–104 (IISI…ASSA). S121 is modified (phosphoserine).

In terms of assembly, interacts (via C-terminus) with TRPA1 and TRPV1. Interacts with TASOR. In terms of tissue distribution, expressed in neurons of the myenteric and submucosal plexuses in the gastric body, jejunum and proximal colon. Expressed in arterial endothelial cells and neurons of the central nervous system and peripheral nervous system. Expressed in umbilical artery endothelial cells (at protein level).

The protein localises to the cell membrane. The protein resides in the membrane. Its subcellular location is the perikaryon. It localises to the cytoplasm. It is found in the perinuclear region. The protein localises to the endoplasmic reticulum. Plays a role during embryonic arterial endothelium differentiation and vascular morphogenesis through the ACVRL1 receptor-dependent signaling pathway upon stimulation by bone morphogenetic proteins, such as GDF2/BMP9 and BMP10. Involved in the regulation of nociception, acting as a modulator of the interaction between TRPA1 and TRPV1, two molecular sensors and mediators of pain signals in dorsal root ganglia (DRG) neurons. Mechanistically, it weakens their interaction, thereby releasing the inhibition of TRPA1 by TRPV1 and increasing the single-channel open probability of the TRPA1-TRPV1 complex. This chain is Transmembrane protein 100 (TMEM100), found in Homo sapiens (Human).